We begin with the raw amino-acid sequence, 121 residues long: Large ribosomal subunit protein bL12 (121 aa).

This sequence belongs to the bacterial ribosomal protein bL12 family. Homodimer. Part of the ribosomal stalk of the 50S ribosomal subunit. Forms a multimeric L10(L12)X complex, where L10 forms an elongated spine to which 2 to 4 L12 dimers bind in a sequential fashion. Binds GTP-bound translation factors.

Forms part of the ribosomal stalk which helps the ribosome interact with GTP-bound translation factors. Is thus essential for accurate translation. In Pelagibacter ubique (strain HTCC1062), this protein is Large ribosomal subunit protein bL12.